The sequence spans 93 residues: Large ribosomal subunit protein uL23 (93 aa).

The protein belongs to the universal ribosomal protein uL23 family. Part of the 50S ribosomal subunit. Contacts protein L29, and trigger factor when it is bound to the ribosome.

One of the early assembly proteins it binds 23S rRNA. One of the proteins that surrounds the polypeptide exit tunnel on the outside of the ribosome. Forms the main docking site for trigger factor binding to the ribosome. This chain is Large ribosomal subunit protein uL23, found in Wolinella succinogenes (strain ATCC 29543 / DSM 1740 / CCUG 13145 / JCM 31913 / LMG 7466 / NCTC 11488 / FDC 602W) (Vibrio succinogenes).